The chain runs to 215 residues: Ectodysplasin-A receptor-associated adapter protein (215 aa).

Disordered regions lie at residues 1-41 (MGLR…FNMS) and 62-86 (LNCP…TGDP). Residues 17-28 (GHQEDHMVKEPV) are compositionally biased toward basic and acidic residues. The Death domain maps to 123 to 202 (DVIRIKLDPC…KVLRRWVDEE (80 aa)).

As to quaternary structure, self-associates and binds EDAR, TRAF1, TRAF2 and TRAF3. Detected in adult pancreas, placenta and fetal skin, and at lower levels in lung, thymus, prostate and testis.

The protein resides in the cytoplasm. Its function is as follows. Adapter protein that interacts with EDAR DEATH domain and couples the receptor to EDA signaling pathway during morphogenesis of ectodermal organs. Mediates the activation of NF-kappa-B. The protein is Ectodysplasin-A receptor-associated adapter protein (EDARADD) of Homo sapiens (Human).